We begin with the raw amino-acid sequence, 225 residues long: PKHD-type hydroxylase Smlt1146 (225 aa).

Positions 78-177 constitute a Fe2OG dioxygenase domain; sequence KYLPPRFNRY…RVASFFWVQS (100 aa). Positions 96, 98, and 158 each coordinate Fe cation. R168 provides a ligand contact to 2-oxoglutarate.

The cofactor is Fe(2+). It depends on L-ascorbate as a cofactor.

The chain is PKHD-type hydroxylase Smlt1146 from Stenotrophomonas maltophilia (strain K279a).